A 184-amino-acid chain; its full sequence is MSSIRFIACLYLISIFGNCHEDPYYQPFDKLNITLDIYTYEDLVPYTVDNDLPNPNDDTTSFVKIYFKNFWITVMTKWCAPFIDTVSVYTSHDNLNIQFYSRDEYDTQSEDKICTIDVKARCKHLTKREVTVQKEAYRYSLSSDLSCFDSIDLDIDLIETNSTDTTVLKSYELMLPKRAKSIHN.

An N-terminal signal peptide occupies residues 1–21 (MSSIRFIACLYLISIFGNCHE).

Belongs to the poxviridae C8 protein family.

The polypeptide is Protein C8 (Vaccinia virus (strain Copenhagen) (VACV)).